The chain runs to 447 residues: Putative branched-chain amino acid carrier protein SERP0977 (447 aa).

12 helical membrane-spanning segments follow: residues 5 to 25 (TWII…LIFP), 40 to 60 (ILAF…VGAL), 74 to 94 (PRFS…LFAI), 114 to 134 (GNLA…YLCL), 143 to 163 (IGSL…IKGF), 193 to 213 (GYLT…VNAI), 229 to 249 (IIAG…LGYI), 290 to 310 (LLGI…IVSV), 317 to 337 (IIPK…SFIL), 350 to 370 (VPVL…ILIA), 382 to 402 (IPLI…QGWI), and 417 to 437 (LEWF…SYFV).

This sequence belongs to the branched chain amino acid transporter family.

It is found in the cell membrane. Functionally, component of the transport system for branched-chain amino acids (leucine, isoleucine and valine), which is coupled to a proton motive force. The protein is Putative branched-chain amino acid carrier protein SERP0977 of Staphylococcus epidermidis (strain ATCC 35984 / DSM 28319 / BCRC 17069 / CCUG 31568 / BM 3577 / RP62A).